Consider the following 607-residue polypeptide: Guanine nucleotide-binding protein-like 1 (607 aa).

Residues 1–14 are compositionally biased toward basic residues; that stretch reads MPRKKPFSVKQKKK. Residues 1–81 form a disordered region; the sequence is MPRKKPFSVK…GPRGYDPNRY (81 aa). The segment covering 15–26 has biased composition (basic and acidic residues); the sequence is QLQDKRERKRGL. A phosphoserine mark is found at Ser32, Ser33, and Ser34. Residues Thr48 and Thr50 each carry the phosphothreonine modification. A phosphoserine mark is found at Ser51 and Ser68. Positions 178–418 constitute a CP-type G domain; that stretch reads WRQLWRVLEM…LCDCPGLIFP (241 aa). 225-228 is a binding site for GTP; sequence NKVD. Ser324 is modified (phosphoserine). GTP contacts are provided by residues 367-374 and 411-415; these read GFPNVGKS and DCPGL. The disordered stretch occupies residues 547–607; it reads GPAGDEEEEE…PYALLGEDEC (61 aa). A compositionally biased stretch (acidic residues) spans 550–584; that stretch reads GDEEEEEEEELSSSCEEEGEEDRDADEEGEGDEDT. Residues Ser561, Ser562, and Ser563 each carry the phosphoserine modification.

Belongs to the TRAFAC class YlqF/YawG GTPase family.

Possible regulatory or functional link with the histocompatibility cluster. This chain is Guanine nucleotide-binding protein-like 1 (GNL1), found in Macaca fascicularis (Crab-eating macaque).